Reading from the N-terminus, the 332-residue chain is MMQDLRLILIVVGAIAIIALLLHGLWTSRKERSSLFRDRPAKRSKKEREQSPIDELDEGVGEVRVRSAHPEDEPSFGHFDAAREEPVVAPKPAPAAEPAPRAVQPAAHQTPPPLSQRPDYDDILLDNYAQEEDDEPQQPAPRREPRVDDLPPVAPAAEPAFHAEPAHQPQPEVKPAVAHEPQPAPAAIKPAKLKETVLVLHVTAHQGGVIGGEILLQSVLQAGFQFGEMGIFHRHISPAGSGPVLFSLANMVKPGSFDPEMMSDFSTPGVSMFMMVPSYGDANQNFKLMLQSAQRIADDVGGVVLDDERRMMTPQKLETYKARLREVLENNA.

Residues methionine 1–arginine 6 lie on the Periplasmic side of the membrane. A helical transmembrane segment spans residues leucine 7 to threonine 27. The Cytoplasmic portion of the chain corresponds to serine 28–alanine 332. Composition is skewed to basic and acidic residues over residues serine 34–serine 51 and glycine 61–aspartate 72. The tract at residues serine 34 to alanine 184 is disordered. The segment covering proline 98–alanine 107 has biased composition (low complexity). The span at aspartate 121–proline 136 shows a compositional bias: acidic residues. The segment covering proline 155–proline 171 has biased composition (low complexity).

Belongs to the ZipA family. As to quaternary structure, interacts with FtsZ via their C-terminal domains.

It localises to the cell inner membrane. Its function is as follows. Essential cell division protein that stabilizes the FtsZ protofilaments by cross-linking them and that serves as a cytoplasmic membrane anchor for the Z ring. Also required for the recruitment to the septal ring of downstream cell division proteins. The polypeptide is Cell division protein ZipA (Serratia proteamaculans (strain 568)).